We begin with the raw amino-acid sequence, 455 residues long: Phosphoglucosamine/phosphogalactosamine mutase (455 aa).

Serine 97 functions as the Phosphoserine intermediate in the catalytic mechanism. 4 residues coordinate Mg(2+): serine 97, aspartate 241, aspartate 243, and aspartate 245. Serine 97 carries the post-translational modification Phosphoserine.

The protein belongs to the phosphohexose mutase family. It depends on Mg(2+) as a cofactor. Post-translationally, activated by phosphorylation.

The catalysed reaction is alpha-D-glucosamine 1-phosphate = D-glucosamine 6-phosphate. It catalyses the reaction D-galactosamine 6-phosphate = alpha-D-galactosamine 1-phosphate. Involved in the synthesis of UDP-N-acetylglucosamine (UDP-GlcNAc) and UDP-N-acetylgalactosamine (UDP-GalNAc). Catalyzes the conversion of glucosamine-6-phosphate to glucosamine-1-phosphate and of galactosamine-6-phosphate to galactosamine-1-phosphate. The protein is Phosphoglucosamine/phosphogalactosamine mutase of Sulfurisphaera tokodaii (strain DSM 16993 / JCM 10545 / NBRC 100140 / 7) (Sulfolobus tokodaii).